Consider the following 360-residue polypeptide: Pyrimidine monooxygenase RutA (360 aa).

Residues isoleucine 49–lysine 50, asparagine 115, glutamate 124, arginine 140–tyrosine 141, and serine 190 contribute to the FMN site.

It belongs to the NtaA/SnaA/DszA monooxygenase family. RutA subfamily.

It catalyses the reaction uracil + FMNH2 + NADH + O2 = (Z)-3-ureidoacrylate + FMN + NAD(+) + H2O + H(+). The enzyme catalyses thymine + FMNH2 + NADH + O2 = (Z)-2-methylureidoacrylate + FMN + NAD(+) + H2O + H(+). Functionally, catalyzes the pyrimidine ring opening between N-3 and C-4 by an unusual flavin hydroperoxide-catalyzed mechanism, adding oxygen atoms in the process to yield ureidoacrylate peracid, that immediately reacts with FMN forming ureidoacrylate and FMN-N(5)-oxide. The FMN-N(5)-oxide reacts spontaneously with NADH to produce FMN. Requires the flavin reductase RutF to regenerate FMN in vivo. The chain is Pyrimidine monooxygenase RutA from Bradyrhizobium sp. (strain BTAi1 / ATCC BAA-1182).